Here is a 428-residue protein sequence, read N- to C-terminus: Cytochrome c biogenesis protein CcsB (428 aa).

The next 3 membrane-spanning stretches (helical) occupy residues 14-34 (LKFA…GTFI), 72-92 (SLWF…CSFR), and 162-182 (IGPL…AYGS).

This sequence belongs to the Ccs1/CcsB family. May interact with CcsA.

Its subcellular location is the cellular thylakoid membrane. In terms of biological role, required during biogenesis of c-type cytochromes (cytochrome c6 and cytochrome f) at the step of heme attachment. This chain is Cytochrome c biogenesis protein CcsB, found in Prochlorococcus marinus (strain MIT 9301).